The sequence spans 197 residues: Histone chaperone asf1b-B (197 aa).

It belongs to the ASF1 family. In terms of assembly, interacts with histone H3 and histone H4.

It is found in the nucleus. Histone chaperone that facilitates histone deposition and histone exchange and removal during nucleosome assembly and disassembly. The chain is Histone chaperone asf1b-B (asf1bb) from Danio rerio (Zebrafish).